Here is a 138-residue protein sequence, read N- to C-terminus: Large ribosomal subunit protein uL16 (138 aa).

Residues M1 to S16 show a composition bias toward basic residues. The segment at M1–T25 is disordered.

It belongs to the universal ribosomal protein uL16 family. In terms of assembly, part of the 50S ribosomal subunit.

In terms of biological role, binds 23S rRNA and is also seen to make contacts with the A and possibly P site tRNAs. This is Large ribosomal subunit protein uL16 from Rhodococcus jostii (strain RHA1).